The sequence spans 438 residues: Coenzyme A disulfide reductase (438 aa).

8–33 is an FAD binding site; sequence GAVAGGATCASQIRRLDKESDIIIFE. Residues T15, Q19, R22, S39, and N42 each coordinate substrate. The active-site Nucleophile is C43. The active-site Redox-active is the C43. K71 is a binding site for substrate. 151–166 lines the NADP(+) pocket; that stretch reads VLVVGAGYVSLEVLEN. Residue 267–277 coordinates FAD; that stretch reads TNVPNIYAIGD. H299 serves as a coordination point for substrate. An FAD-binding site is contributed by Y419. K427 contributes to the substrate binding site.

It belongs to the class-III pyridine nucleotide-disulfide oxidoreductase family. Homodimer. Requires FAD as cofactor.

The catalysed reaction is NADP(+) + 2 CoA = CoA-disulfide + NADPH + H(+). Its function is as follows. Catalyzes specifically the NADPH-dependent reduction of coenzyme A disulfide. This chain is Coenzyme A disulfide reductase, found in Staphylococcus aureus (strain COL).